Consider the following 275-residue polypeptide: uncharacterized protein (275 aa).

The protein belongs to the SMP-30/CGR1 family.

This is an uncharacterized protein from Sulfolobus acidocaldarius (strain ATCC 33909 / DSM 639 / JCM 8929 / NBRC 15157 / NCIMB 11770).